The following is a 36-amino-acid chain: Lambda-hexatoxin-Hv1a (36 aa).

4 disulfides stabilise this stretch: cysteine 3/cysteine 17, cysteine 10/cysteine 22, cysteine 13/cysteine 14, and cysteine 16/cysteine 33.

It belongs to the neurotoxin 11 (kappa toxin) family. As to expression, expressed by the venom gland.

The protein resides in the secreted. In terms of biological role, this excitatory toxin inhibits insect calcium-activated potassium (KCa) channels (Slo-type). This Hadronyche versuta (Blue mountains funnel-web spider) protein is Lambda-hexatoxin-Hv1a.